A 293-amino-acid polypeptide reads, in one-letter code: MEKSTWTTKVGLAQMLKGGVIMDVVTPEQARIAEEAGAVAVMALERVPADIRAQGGVARMSDPELILAIKQAVTIPVMAKARIGHFVEAQVLEAIGVDYIDESEVLTPADEEHHINKHKFRVPFVCGCRNLGEALRRVAEGAAMLRTKGEAGTGNVVEAVRHARAVYSEIRRLQSMNEDELFTYAKQIQAPYELVKQVATEGKLPVVNFAAGGIATPADAALLMQLGVDGIFVGSGIFKSGDPVKRARAIVEATTHYNDPEIIAEVSKGLGEAMVGINIDQIPADQLMARRGW.

A D-ribose 5-phosphate-binding site is contributed by D23. Residue K80 is the Schiff-base intermediate with D-ribose 5-phosphate of the active site. G152 is a binding site for D-ribose 5-phosphate. A D-glyceraldehyde 3-phosphate-binding site is contributed by R164. Residues G213 and 234–235 each bind D-ribose 5-phosphate; that span reads GS.

The protein belongs to the PdxS/SNZ family. In the presence of PdxT, forms a dodecamer of heterodimers.

It catalyses the reaction aldehydo-D-ribose 5-phosphate + D-glyceraldehyde 3-phosphate + L-glutamine = pyridoxal 5'-phosphate + L-glutamate + phosphate + 3 H2O + H(+). The protein operates within cofactor biosynthesis; pyridoxal 5'-phosphate biosynthesis. Its function is as follows. Catalyzes the formation of pyridoxal 5'-phosphate from ribose 5-phosphate (RBP), glyceraldehyde 3-phosphate (G3P) and ammonia. The ammonia is provided by the PdxT subunit. Can also use ribulose 5-phosphate and dihydroxyacetone phosphate as substrates, resulting from enzyme-catalyzed isomerization of RBP and G3P, respectively. This is Pyridoxal 5'-phosphate synthase subunit PdxS from Chloroflexus aurantiacus (strain ATCC 29366 / DSM 635 / J-10-fl).